Here is a 390-residue protein sequence, read N- to C-terminus: Galactokinase (390 aa).

Position 34 to 37 (34 to 37) interacts with substrate; it reads EHTD. Residues S68 and 122-128 each bind ATP; that span reads GSGLSSS. S128 and E160 together coordinate Mg(2+). D172 (proton acceptor) is an active-site residue. Y221 provides a ligand contact to substrate.

The protein belongs to the GHMP kinase family. GalK subfamily.

It is found in the cytoplasm. The catalysed reaction is alpha-D-galactose + ATP = alpha-D-galactose 1-phosphate + ADP + H(+). It participates in carbohydrate metabolism; galactose metabolism. Catalyzes the transfer of the gamma-phosphate of ATP to D-galactose to form alpha-D-galactose-1-phosphate (Gal-1-P). This chain is Galactokinase, found in Chloroflexus aggregans (strain MD-66 / DSM 9485).